A 462-amino-acid polypeptide reads, in one-letter code: Arginine biosynthesis bifunctional protein ArgJ, mitochondrial (462 aa).

T200, K228, T239, E326, N457, and T462 together coordinate substrate. Catalysis depends on T239, which acts as the Nucleophile.

This sequence belongs to the ArgJ family. As to quaternary structure, heterodimer of an alpha and a beta chain. In terms of processing, the alpha and beta chains are autoproteolytically processed from a single precursor protein within the mitochondrion.

The protein localises to the mitochondrion matrix. It carries out the reaction N(2)-acetyl-L-ornithine + L-glutamate = N-acetyl-L-glutamate + L-ornithine. The enzyme catalyses L-glutamate + acetyl-CoA = N-acetyl-L-glutamate + CoA + H(+). It participates in amino-acid biosynthesis; L-arginine biosynthesis; L-ornithine and N-acetyl-L-glutamate from L-glutamate and N(2)-acetyl-L-ornithine (cyclic): step 1/1. The protein operates within amino-acid biosynthesis; L-arginine biosynthesis; N(2)-acetyl-L-ornithine from L-glutamate: step 1/4. Its function is as follows. Catalyzes two activities which are involved in the cyclic version of arginine biosynthesis: the synthesis of acetylglutamate from glutamate and acetyl-CoA, and of ornithine by transacetylation between acetylornithine and glutamate. This Pyrenophora tritici-repentis (strain Pt-1C-BFP) (Wheat tan spot fungus) protein is Arginine biosynthesis bifunctional protein ArgJ, mitochondrial.